The sequence spans 110 residues: Nucleoid-associated protein PsycPRwf_1729 (110 aa).

This sequence belongs to the YbaB/EbfC family. Homodimer.

The protein localises to the cytoplasm. Its subcellular location is the nucleoid. Binds to DNA and alters its conformation. May be involved in regulation of gene expression, nucleoid organization and DNA protection. The polypeptide is Nucleoid-associated protein PsycPRwf_1729 (Psychrobacter sp. (strain PRwf-1)).